The chain runs to 379 residues: Cytochrome b (379 aa).

4 consecutive transmembrane segments (helical) span residues 33–53 (FGSL…FLAM), 77–98 (WILR…YIHV), 113–133 (WNIG…GYVL), and 178–198 (FFAF…VHLL). Residues His83 and His97 each contribute to the heme b site. Residues His182 and His196 each contribute to the heme b site. Residue His201 coordinates a ubiquinone. 4 helical membrane-spanning segments follow: residues 226 to 246 (IKDI…VLFS), 288 to 308 (LGGV…PVLH), 320 to 340 (LSQC…WIGG), and 347 to 367 (YVIX…XXXX).

Belongs to the cytochrome b family. The cytochrome bc1 complex contains 11 subunits: 3 respiratory subunits (MT-CYB, CYC1 and UQCRFS1), 2 core proteins (UQCRC1 and UQCRC2) and 6 low-molecular weight proteins (UQCRH/QCR6, UQCRB/QCR7, UQCRQ/QCR8, UQCR10/QCR9, UQCR11/QCR10 and a cleavage product of UQCRFS1). This cytochrome bc1 complex then forms a dimer. The cofactor is heme b.

The protein localises to the mitochondrion inner membrane. Its function is as follows. Component of the ubiquinol-cytochrome c reductase complex (complex III or cytochrome b-c1 complex) that is part of the mitochondrial respiratory chain. The b-c1 complex mediates electron transfer from ubiquinol to cytochrome c. Contributes to the generation of a proton gradient across the mitochondrial membrane that is then used for ATP synthesis. In Myotis goudotii (Malagasy mouse-eared bat), this protein is Cytochrome b (MT-CYB).